The chain runs to 450 residues: LanC-like protein 2 (450 aa).

A lipid anchor (N-myristoyl glycine) is attached at Gly2. The tract at residues 2–14 (GETMSKRLKFHLG) is interaction with inositol phospholipids. At Tyr198 the chain carries Phosphotyrosine.

This sequence belongs to the LanC-like protein family. Interacts with an array of inositol phospholipids such as phosphatidylinositol 3-phosphate (PI3P), phosphatidylinositol 4-phosphate (PI4P) and phosphatidylinositol 5-phosphate (PI5P). PIP-binding enhances membrane association. Post-translationally, myristoylated. Essential for membrane association.

It localises to the nucleus. Its subcellular location is the cytoplasm. The protein resides in the cell membrane. In terms of biological role, necessary for abscisic acid (ABA) binding on the cell membrane and activation of the ABA signaling pathway in granulocytes. This Mus musculus (Mouse) protein is LanC-like protein 2 (Lancl2).